The chain runs to 328 residues: 4-hydroxythreonine-4-phosphate dehydrogenase (328 aa).

2 residues coordinate substrate: His-134 and Thr-135. 3 residues coordinate a divalent metal cation: His-164, His-209, and His-264. The substrate site is built by Lys-272, Asn-281, and Arg-290.

This sequence belongs to the PdxA family. As to quaternary structure, homodimer. Requires Zn(2+) as cofactor. The cofactor is Mg(2+). Co(2+) is required as a cofactor.

It is found in the cytoplasm. The enzyme catalyses 4-(phosphooxy)-L-threonine + NAD(+) = 3-amino-2-oxopropyl phosphate + CO2 + NADH. The protein operates within cofactor biosynthesis; pyridoxine 5'-phosphate biosynthesis; pyridoxine 5'-phosphate from D-erythrose 4-phosphate: step 4/5. Catalyzes the NAD(P)-dependent oxidation of 4-(phosphooxy)-L-threonine (HTP) into 2-amino-3-oxo-4-(phosphooxy)butyric acid which spontaneously decarboxylates to form 3-amino-2-oxopropyl phosphate (AHAP). The sequence is that of 4-hydroxythreonine-4-phosphate dehydrogenase from Shewanella denitrificans (strain OS217 / ATCC BAA-1090 / DSM 15013).